A 163-amino-acid polypeptide reads, in one-letter code: UPF0587 protein CG4646 (163 aa).

Zn(2+) contacts are provided by cysteine 33, cysteine 36, cysteine 68, and cysteine 71.

Belongs to the UPF0587 family.

The sequence is that of UPF0587 protein CG4646 from Drosophila melanogaster (Fruit fly).